Consider the following 262-residue polypeptide: Small ribosomal subunit protein eS1 (262 aa).

The protein belongs to the eukaryotic ribosomal protein eS1 family. In terms of assembly, component of the small ribosomal subunit. Mature ribosomes consist of a small (40S) and a large (60S) subunit. The 40S subunit contains about 33 different proteins and 1 molecule of RNA (18S). The 60S subunit contains about 49 different proteins and 3 molecules of RNA (25S, 5.8S and 5S).

The protein resides in the cytoplasm. The protein is Small ribosomal subunit protein eS1 of Cryptosporidium hominis.